Reading from the N-terminus, the 194-residue chain is Heme transporter hrg-1 (194 aa).

The next 4 membrane-spanning stretches (helical) occupy residues 45-65, 71-91, 113-133, and 143-163; these read QIWIAWLGVSAGVMAGTVFAI, IAVTMCFISSGFATLVLHLHL, GATVSFLSFIAMVFCLVVAGI, and LMGANLWIAAVWFFMTSKWSA. Residues 182 to 183 carry the Di-leucine motif motif; the sequence is LL.

It belongs to the HRG family. Specifically expressed in the intestinal cells in larvae and adults.

The protein localises to the endosome membrane. It is found in the lysosome membrane. Its function is as follows. Heme transporter that regulates intracellular heme availability through the endosomal or lysosomal compartment. This is Heme transporter hrg-1 (hrg-1) from Caenorhabditis elegans.